A 423-amino-acid polypeptide reads, in one-letter code: Mannitol-1-phosphate 5-dehydrogenase (423 aa).

Zn(2+) contacts are provided by cysteine 40, histidine 69, and glutamate 70.

Belongs to the zinc-containing alcohol dehydrogenase family. The cofactor is Zn(2+).

The catalysed reaction is D-mannitol 1-phosphate + NAD(+) = beta-D-fructose 6-phosphate + NADH + H(+). In terms of biological role, seems to be involved in mannitol utilization. Complements an E.coli mtlD deletion mutant. The polypeptide is Mannitol-1-phosphate 5-dehydrogenase (Aliivibrio fischeri (strain ATCC 700601 / ES114) (Vibrio fischeri)).